A 714-amino-acid chain; its full sequence is MSEEIITPVYCTGVSAQVQKQRARELGLGRHENAIKYLGQDYEQLRVRCLQSGTLFRDEAFPPVPQSLGYKDLGPNSSKTYGIKWKRPTELLSNPQFIVDGATRTDICQGALGDCWLLAAIASLTLNDTLLHRVVPHGQSFQNGYAGIFHFQLWQFGEWVDVVVDDLLPIKDGKLVFVHSAEGNEFWSALLEKAYAKVNGSYEALSGGSTSEGFEDFTGGVTEWYELRKAPSDLYQIILKALERGSLLGCSIDISSVLDMEAITFKKLVKGHAYSVTGAKQVNYRGQMVSLIRMRNPWGEVEWTGAWSDSSSEWNNVDPYERDQLRVKMEDGEFWMSFRDFMREFTRLEICNLTPDALKSRTIRKWNTTLYEGTWRRGSTAGGCRNYPATFWVNPQFKIRLDETDDPDDYGDRESGCSFVLALMQKHRRRERRFGRDMETIGFAVYEVPPELAGQPAVHLKRDFFLANASRARSEQFINLREVSTRFRLPPGEYVVVPSTFEPNKEGDFVLRFFSEKSAGTAELDDQIQANLPDEQVLSEEEIDENFKALFRQLAGEDMETSVKELRTILNRIISKHKDLRTKGFSLESCRSMVNLMDRDGNGKLGLVEFNILWNRIRNYLSIFRKFDLDKSGSMSAYEMRMAIESAGFKLNKKLYELIITRYSEPDLAVDFDNFVCCLVRLETMFRFFKTLDTDLDGVVTFDLFKWLQLTMFA.

The region spanning 55–354 is the Calpain catalytic domain; it reads LFRDEAFPPV…FTRLEICNLT (300 aa). Positions 109 and 114 each coordinate Ca(2+). Residues C115, H272, and N296 contribute to the active site. Ca(2+) is bound by residues N316, D318, and D323. At T354 the chain carries Phosphothreonine. The interval 355 to 526 is domain III; the sequence is PDALKSRTIR…KSAGTAELDD (172 aa). The interval 527–542 is linker; the sequence is QIQANLPDEQVLSEEE. EF-hand domains follow at residues 541 to 576, 585 to 618, 615 to 650, and 680 to 714; these read EEID…IISK, FSLE…NRIR, NRIR…AGFK, and VRLE…TMFA. A domain IV region spans residues 543–713; sequence IDENFKALFR…LFKWLQLTMF (171 aa). D598, D600, N602, K604, E609, D628, D630, S632, S634, and E639 together coordinate Ca(2+).

This sequence belongs to the peptidase C2 family. In terms of assembly, forms a heterodimer with a small (regulatory) subunit CAPNS1. It depends on Ca(2+) as a cofactor. Undergoes calcium-induced successive autoproteolytic cleavages that generate a membrane-bound 78 kDa active form and an intracellular 75 kDa active form. Calpastatin reduces with high efficiency the transition from 78 kDa to 75 kDa calpain forms.

The protein resides in the cytoplasm. The protein localises to the cell membrane. The enzyme catalyses Broad endopeptidase specificity.. Its activity is regulated as follows. Activated by micromolar concentrations of calcium and inhibited by calpastatin. Its function is as follows. Calcium-regulated non-lysosomal thiol-protease which catalyzes limited proteolysis of substrates involved in cytoskeletal remodeling and signal transduction. Proteolytically cleaves CTBP1. Cleaves and activates caspase-7 (CASP7). The sequence is that of Calpain-1 catalytic subunit from Pongo abelii (Sumatran orangutan).